Consider the following 94-residue polypeptide: Aspartyl/glutamyl-tRNA(Asn/Gln) amidotransferase subunit C (94 aa).

The protein belongs to the GatC family. As to quaternary structure, heterotrimer of A, B and C subunits.

It catalyses the reaction L-glutamyl-tRNA(Gln) + L-glutamine + ATP + H2O = L-glutaminyl-tRNA(Gln) + L-glutamate + ADP + phosphate + H(+). It carries out the reaction L-aspartyl-tRNA(Asn) + L-glutamine + ATP + H2O = L-asparaginyl-tRNA(Asn) + L-glutamate + ADP + phosphate + 2 H(+). In terms of biological role, allows the formation of correctly charged Asn-tRNA(Asn) or Gln-tRNA(Gln) through the transamidation of misacylated Asp-tRNA(Asn) or Glu-tRNA(Gln) in organisms which lack either or both of asparaginyl-tRNA or glutaminyl-tRNA synthetases. The reaction takes place in the presence of glutamine and ATP through an activated phospho-Asp-tRNA(Asn) or phospho-Glu-tRNA(Gln). In Campylobacter jejuni subsp. doylei (strain ATCC BAA-1458 / RM4099 / 269.97), this protein is Aspartyl/glutamyl-tRNA(Asn/Gln) amidotransferase subunit C.